Here is a 427-residue protein sequence, read N- to C-terminus: 3-phosphoshikimate 1-carboxyvinyltransferase (427 aa).

3-phosphoshikimate is bound by residues lysine 20, serine 21, and arginine 25. Lysine 20 lines the phosphoenolpyruvate pocket. Phosphoenolpyruvate contacts are provided by glycine 92 and arginine 120. Residues serine 166, glutamine 168, aspartate 312, and lysine 339 each contribute to the 3-phosphoshikimate site. Glutamine 168 serves as a coordination point for phosphoenolpyruvate. Aspartate 312 serves as the catalytic Proton acceptor. The phosphoenolpyruvate site is built by arginine 343 and arginine 385.

Belongs to the EPSP synthase family. Monomer.

Its subcellular location is the cytoplasm. It carries out the reaction 3-phosphoshikimate + phosphoenolpyruvate = 5-O-(1-carboxyvinyl)-3-phosphoshikimate + phosphate. It participates in metabolic intermediate biosynthesis; chorismate biosynthesis; chorismate from D-erythrose 4-phosphate and phosphoenolpyruvate: step 6/7. Its function is as follows. Catalyzes the transfer of the enolpyruvyl moiety of phosphoenolpyruvate (PEP) to the 5-hydroxyl of shikimate-3-phosphate (S3P) to produce enolpyruvyl shikimate-3-phosphate and inorganic phosphate. This is 3-phosphoshikimate 1-carboxyvinyltransferase from Streptococcus agalactiae serotype III (strain NEM316).